The following is a 364-amino-acid chain: Aminomethyltransferase (364 aa).

Belongs to the GcvT family. The glycine cleavage system is composed of four proteins: P, T, L and H.

The catalysed reaction is N(6)-[(R)-S(8)-aminomethyldihydrolipoyl]-L-lysyl-[protein] + (6S)-5,6,7,8-tetrahydrofolate = N(6)-[(R)-dihydrolipoyl]-L-lysyl-[protein] + (6R)-5,10-methylene-5,6,7,8-tetrahydrofolate + NH4(+). In terms of biological role, the glycine cleavage system catalyzes the degradation of glycine. The chain is Aminomethyltransferase from Shewanella oneidensis (strain ATCC 700550 / JCM 31522 / CIP 106686 / LMG 19005 / NCIMB 14063 / MR-1).